We begin with the raw amino-acid sequence, 154 residues long: NADPH-dependent 7-cyano-7-deazaguanine reductase (154 aa).

Positions 1 to 24 (MPKTDVSGLSQLGTKVDLPQSPEE) are disordered. Cys52 (thioimide intermediate) is an active-site residue. Asp59 acts as the Proton donor in catalysis. Substrate is bound by residues 74-76 (VES) and 93-94 (HE).

This sequence belongs to the GTP cyclohydrolase I family. QueF type 1 subfamily.

It is found in the cytoplasm. The catalysed reaction is 7-aminomethyl-7-carbaguanine + 2 NADP(+) = 7-cyano-7-deazaguanine + 2 NADPH + 3 H(+). The protein operates within tRNA modification; tRNA-queuosine biosynthesis. Catalyzes the NADPH-dependent reduction of 7-cyano-7-deazaguanine (preQ0) to 7-aminomethyl-7-deazaguanine (preQ1). This Sinorhizobium fredii (strain NBRC 101917 / NGR234) protein is NADPH-dependent 7-cyano-7-deazaguanine reductase.